The sequence spans 94 residues: Pyrimidine/purine nucleoside phosphorylase (94 aa).

Belongs to the nucleoside phosphorylase PpnP family.

The catalysed reaction is a purine D-ribonucleoside + phosphate = a purine nucleobase + alpha-D-ribose 1-phosphate. The enzyme catalyses adenosine + phosphate = alpha-D-ribose 1-phosphate + adenine. It carries out the reaction cytidine + phosphate = cytosine + alpha-D-ribose 1-phosphate. It catalyses the reaction guanosine + phosphate = alpha-D-ribose 1-phosphate + guanine. The catalysed reaction is inosine + phosphate = alpha-D-ribose 1-phosphate + hypoxanthine. The enzyme catalyses thymidine + phosphate = 2-deoxy-alpha-D-ribose 1-phosphate + thymine. It carries out the reaction uridine + phosphate = alpha-D-ribose 1-phosphate + uracil. It catalyses the reaction xanthosine + phosphate = alpha-D-ribose 1-phosphate + xanthine. Functionally, catalyzes the phosphorolysis of diverse nucleosides, yielding D-ribose 1-phosphate and the respective free bases. Can use uridine, adenosine, guanosine, cytidine, thymidine, inosine and xanthosine as substrates. Also catalyzes the reverse reactions. In Salmonella paratyphi C (strain RKS4594), this protein is Pyrimidine/purine nucleoside phosphorylase.